A 203-amino-acid chain; its full sequence is Putative 3-methyladenine DNA glycosylase (203 aa).

Belongs to the DNA glycosylase MPG family.

The protein is Putative 3-methyladenine DNA glycosylase of Mycobacterium tuberculosis (strain ATCC 25177 / H37Ra).